A 656-amino-acid polypeptide reads, in one-letter code: Sulfate transporter 1.3 (656 aa).

The segment at methionine 1–valine 30 is disordered. The Cytoplasmic portion of the chain corresponds to methionine 1–arginine 94. A helical membrane pass occupies residues glycine 95 to alanine 115. The Extracellular segment spans residues lysine 116 to serine 119. A helical transmembrane segment spans residues leucine 120–glycine 140. Topologically, residues serine 141–aspartate 144 are cytoplasmic. Residues isoleucine 145–isoleucine 165 form a helical membrane-spanning segment. Residues aspartate 166–arginine 176 are Extracellular-facing. The next 2 membrane-spanning stretches (helical) occupy residues leucine 177–leucine 197 and glycine 198–isoleucine 218. Residues threonine 219 to asparagine 256 lie on the Extracellular side of the membrane. Residues tryptophan 257 to glycine 277 traverse the membrane as a helical segment. The Cytoplasmic segment spans residues lysine 278–leucine 283. A helical transmembrane segment spans residues phenylalanine 284–isoleucine 304. Topologically, residues threonine 305 to arginine 342 are extracellular. Residues isoleucine 343–alanine 363 form a helical membrane-spanning segment. At alanine 364–glutamate 375 the chain is on the cytoplasmic side. The helical transmembrane segment at methionine 376 to glycine 396 threads the bilayer. The Extracellular segment spans residues serine 397–alanine 412. The helical transmembrane segment at valine 413–phenylalanine 433 threads the bilayer. Topologically, residues lysine 434–leucine 441 are cytoplasmic. The helical transmembrane segment at alanine 442–phenylalanine 462 threads the bilayer. Over lysine 463–methionine 473 the chain is Extracellular. Residues glycine 474–isoleucine 494 traverse the membrane as a helical segment. The Cytoplasmic portion of the chain corresponds to serine 495–valine 656. The 124-residue stretch at glutamine 525–cysteine 648 folds into the STAS domain.

This sequence belongs to the SLC26A/SulP transporter (TC 2.A.53) family. Expressed in the phloem of cotyledons, hypocotyls and roots.

The protein localises to the membrane. Functionally, high-affinity H(+)/sulfate cotransporter that mediates the loading of sulfate into the sieve tube. Plays a central role in the regulation of sulfate assimilation. This chain is Sulfate transporter 1.3 (SULTR1;3), found in Arabidopsis thaliana (Mouse-ear cress).